The primary structure comprises 169 residues: Small ribosomal subunit protein uS5 (169 aa).

One can recognise an S5 DRBM domain in the interval 14 to 77; sequence LQEKVVEVRR…EDAKKNLIVV (64 aa).

The protein belongs to the universal ribosomal protein uS5 family. In terms of assembly, part of the 30S ribosomal subunit. Contacts proteins S4 and S8.

Its function is as follows. With S4 and S12 plays an important role in translational accuracy. Functionally, located at the back of the 30S subunit body where it stabilizes the conformation of the head with respect to the body. This is Small ribosomal subunit protein uS5 from Clostridioides difficile (strain 630) (Peptoclostridium difficile).